The primary structure comprises 464 residues: Chromosomal replication initiator protein DnaA (464 aa).

A domain I, interacts with DnaA modulators region spans residues 1-74; the sequence is MDAVGYEVFW…ERKFLELSGH (74 aa). The tract at residues 74 to 117 is domain II; that stretch reads HPIKLLFAVKKGTPHGNTAPPKHVHTYLEKNSPAEVPSKKSFHP. The interval 118 to 341 is domain III, AAA+ region; that stretch reads DLNRDYTFEN…GALTKIIAFI (224 aa). The ATP site is built by glycine 162, glycine 164, lysine 165, and threonine 166. The tract at residues 342–464 is domain IV, binds dsDNA; it reads EVSGSITIDI…LKSKVQDSIR (123 aa).

Belongs to the DnaA family. In terms of assembly, oligomerizes as a right-handed, spiral filament on DNA at oriC.

The protein resides in the cytoplasm. Plays an essential role in the initiation and regulation of chromosomal replication. ATP-DnaA binds to the origin of replication (oriC) to initiate formation of the DNA replication initiation complex once per cell cycle. Binds the DnaA box (a 9 base pair repeat at the origin) and separates the double-stranded (ds)DNA. Forms a right-handed helical filament on oriC DNA; dsDNA binds to the exterior of the filament while single-stranded (ss)DNA is stabiized in the filament's interior. The ATP-DnaA-oriC complex binds and stabilizes one strand of the AT-rich DNA unwinding element (DUE), permitting loading of DNA polymerase. After initiation quickly degrades to an ADP-DnaA complex that is not apt for DNA replication. Binds acidic phospholipids. The polypeptide is Chromosomal replication initiator protein DnaA (Treponema pallidum (strain Nichols)).